Consider the following 499-residue polypeptide: Lysine--tRNA ligase (499 aa).

Residues glutamate 408 and glutamate 415 each contribute to the Mg(2+) site.

Belongs to the class-II aminoacyl-tRNA synthetase family. As to quaternary structure, homodimer. Mg(2+) is required as a cofactor.

The protein localises to the cytoplasm. The enzyme catalyses tRNA(Lys) + L-lysine + ATP = L-lysyl-tRNA(Lys) + AMP + diphosphate. The sequence is that of Lysine--tRNA ligase from Thermoanaerobacter pseudethanolicus (strain ATCC 33223 / 39E) (Clostridium thermohydrosulfuricum).